Here is a 573-residue protein sequence, read N- to C-terminus: Developmental and secondary metabolism regulator veA (573 aa).

Positions 1–11 are enriched in pro residues; the sequence is MATLAAPPPPL. Disordered regions lie at residues 1-24 and 39-63; these read MATL…SRIT and QPKR…DPPP. Residues 27–230 form the Velvet domain; the sequence is GKKITYKLNI…AEQGCRVRIR (204 aa). A Nuclear localization signal motif is present at residues 41–46; the sequence is KRARAC. Residues Thr167 and Thr170 each carry the phosphothreonine modification. At Ser183 the chain carries Phosphoserine. Disordered stretches follow at residues 236–295, 307–367, and 384–573; these read RRRG…RRPS, YQRP…SYQS, and SHIP…ATMR. A compositionally biased stretch (basic and acidic residues) spans 241 to 260; sequence KRTEDYDYDNERGYNNRRPD. Tyr254 bears the Phosphotyrosine mark. Pro residues-rich tracts occupy residues 318–339 and 347–361; these read SSTP…PSTP and PAPP…PPLH. The segment covering 387–412 has biased composition (low complexity); the sequence is PQQTTTPTHPYSPRSSISHSRNQSIS. Residues 452–493 are compositionally biased toward polar residues; the sequence is PSVNSRSKTPSNMITSLPPIQSLSELPSTTSQPSSAIGSSPA. The tract at residues 459-498 is PEST; sequence KTPSNMITSLPPIQSLSELPSTTSQPSSAIGSSPANEPGP. Residues 510-522 are compositionally biased toward basic and acidic residues; sequence RTYEESFGHDDRP.

The protein belongs to the velvet family. VeA subfamily. In terms of assembly, component of the heterotrimeric velvet complex composed of laeA, veA and velB; VeA acting as a bridging protein between laeA and velB. Interacts with the light-sensing phytochrome fphA. Interacts with llmF. Post-translationally, phosphorylated at Thr-167, Thr-170, Ser-183 and Tyr-254. Thr-167 should be phosphorylated and T170 and S183 should be dephosphorylated to achieve light induction of conidiation. Phosphorylation of Ser-183 and Tyr-254 influence sterigmatocystin production in a light-independent manner. Phosphorylation of Thr-167 and Thr-170 modulates expression of veA.

The protein resides in the nucleus. It localises to the cytoplasm. Functionally, component of the velvet transcription factor complex that controls sexual/asexual developmental ratio in response to light, promoting sexual development in the darkness while stimulating asexual sporulation under illumination. The velvet complex acts as a global regulator for secondary metabolite gene expression. Controls the expression of the sterigmatocystin and penicillin gene clusters. Represses the cryptic ors gene cluster producing orsellinic acid and its F9775 derivatives in a laeA-independent manner. Required for full induction of faoA gene expression by fructosyl amines. Positively regulates the expression of the early sexual development gene esdC. Controls the expression of mannoprotein mnpA. The sequence is that of Developmental and secondary metabolism regulator veA from Emericella nidulans (strain FGSC A4 / ATCC 38163 / CBS 112.46 / NRRL 194 / M139) (Aspergillus nidulans).